The chain runs to 319 residues: ATP-dependent 6-phosphofructokinase (319 aa).

Gly11 contributes to the ATP binding site. 21 to 25 is a binding site for ADP; that stretch reads RAVAR. ATP-binding positions include 72–73 and 102–105; these read RY and GDGS. Asp103 is a Mg(2+) binding site. 125–127 provides a ligand contact to substrate; that stretch reads TID. The active-site Proton acceptor is Asp127. Arg154 contributes to the ADP binding site. Substrate contacts are provided by residues Arg162 and 169–171; that span reads MGR. ADP is bound by residues 185-187 and Arg211; that span reads GAE. Residues Glu222, Arg243, and 249-252 each bind substrate; that span reads HIVR.

It belongs to the phosphofructokinase type A (PFKA) family. ATP-dependent PFK group I subfamily. Prokaryotic clade 'B1' sub-subfamily. Homotetramer. Mg(2+) is required as a cofactor.

Its subcellular location is the cytoplasm. It carries out the reaction beta-D-fructose 6-phosphate + ATP = beta-D-fructose 1,6-bisphosphate + ADP + H(+). It functions in the pathway carbohydrate degradation; glycolysis; D-glyceraldehyde 3-phosphate and glycerone phosphate from D-glucose: step 3/4. Its activity is regulated as follows. Allosterically activated by ADP and other diphosphonucleosides, and allosterically inhibited by phosphoenolpyruvate. Catalyzes the phosphorylation of D-fructose 6-phosphate to fructose 1,6-bisphosphate by ATP, the first committing step of glycolysis. In Lacticaseibacillus casei (strain BL23) (Lactobacillus casei), this protein is ATP-dependent 6-phosphofructokinase.